Consider the following 228-residue polypeptide: N-acylneuraminate cytidylyltransferase (228 aa).

Belongs to the CMP-NeuNAc synthase family.

The protein localises to the cytoplasm. The enzyme catalyses an N-acylneuraminate + CTP = a CMP-N-acyl-beta-neuraminate + diphosphate. In Neisseria meningitidis serogroup B (strain ATCC BAA-335 / MC58), this protein is N-acylneuraminate cytidylyltransferase (neuA).